A 178-amino-acid polypeptide reads, in one-letter code: uncharacterized protein (178 aa).

Residues 64–103 form a disordered region; it reads GVSDNTNKTTAKDNVSDKSSENEVAQPKQVTPPVDATGNT. Residues 73–84 are compositionally biased toward basic and acidic residues; sequence TAKDNVSDKSSE.

This is an uncharacterized protein from Acidianus sp. F28 (AFV-2).